The primary structure comprises 119 residues: Large ribosomal subunit protein uL18 (119 aa).

The protein belongs to the universal ribosomal protein uL18 family. As to quaternary structure, part of the 50S ribosomal subunit; part of the 5S rRNA/L5/L18/L25 subcomplex. Contacts the 5S and 23S rRNAs.

This is one of the proteins that bind and probably mediate the attachment of the 5S RNA into the large ribosomal subunit, where it forms part of the central protuberance. This chain is Large ribosomal subunit protein uL18, found in Jannaschia sp. (strain CCS1).